Reading from the N-terminus, the 581-residue chain is Caprolactamase subunit beta (581 aa).

The Zn(2+) site is built by Asp-41, His-99, Asp-102, and His-124.

The protein belongs to the HyuB family. As to quaternary structure, the caprolactamase is a heterotetramer composed of two alpha subunits (CapA) and two beta subunits (CapB). The cofactor is Zn(2+).

With respect to regulation, activity is dependent on the presence of ATP and bicarbonate. The requirement for bicarbonate may be related to allosteric activation through conformational effects, but it is also conceivable that carboxyphosphate is formed and acts as a mediator in caprolactam activation, forming carboxy- or phospholactim. Component of a caprolactamase involved in the degradation of caprolactam, an industrial compound mainly used in the production of Nylon 6. Catalyzes the ATP-dependent hydrolysis of the caprolactam ring to form 6-aminocaproic acid (6-ACA). The beta subunit is responsible for hydrolytic lactam ring opening. The enzyme cannot use 5-oxoproline. The sequence is that of Caprolactamase subunit beta from Pseudomonas jessenii.